The sequence spans 473 residues: Ribosomal RNA small subunit methyltransferase F (473 aa).

Residues 123–129 (AAAPGSK), Glu147, Asp174, and Asp192 each bind S-adenosyl-L-methionine. Cys245 acts as the Nucleophile in catalysis.

Belongs to the class I-like SAM-binding methyltransferase superfamily. RsmB/NOP family.

The protein resides in the cytoplasm. It catalyses the reaction cytidine(1407) in 16S rRNA + S-adenosyl-L-methionine = 5-methylcytidine(1407) in 16S rRNA + S-adenosyl-L-homocysteine + H(+). Specifically methylates the cytosine at position 1407 (m5C1407) of 16S rRNA. The chain is Ribosomal RNA small subunit methyltransferase F from Vibrio atlanticus (strain LGP32) (Vibrio splendidus (strain Mel32)).